The sequence spans 244 residues: Phosphoadenosine 5'-phosphosulfate reductase (244 aa).

Residue C239 is the Nucleophile; cysteine thiosulfonate intermediate of the active site.

It belongs to the PAPS reductase family. CysH subfamily.

It localises to the cytoplasm. The enzyme catalyses [thioredoxin]-disulfide + sulfite + adenosine 3',5'-bisphosphate + 2 H(+) = [thioredoxin]-dithiol + 3'-phosphoadenylyl sulfate. It participates in sulfur metabolism; hydrogen sulfide biosynthesis; sulfite from sulfate: step 3/3. In terms of biological role, catalyzes the formation of sulfite from phosphoadenosine 5'-phosphosulfate (PAPS) using thioredoxin as an electron donor. This chain is Phosphoadenosine 5'-phosphosulfate reductase, found in Salmonella heidelberg (strain SL476).